Reading from the N-terminus, the 693-residue chain is Glycine--tRNA ligase beta subunit (693 aa).

This sequence belongs to the class-II aminoacyl-tRNA synthetase family. In terms of assembly, tetramer of two alpha and two beta subunits.

The protein localises to the cytoplasm. The catalysed reaction is tRNA(Gly) + glycine + ATP = glycyl-tRNA(Gly) + AMP + diphosphate. This chain is Glycine--tRNA ligase beta subunit, found in Vibrio campbellii (strain ATCC BAA-1116).